Reading from the N-terminus, the 483-residue chain is Alginate biosynthesis protein AlgA (483 aa).

It belongs to the mannose-6-phosphate isomerase type 2 family. In terms of assembly, monomer. Co(2+) serves as cofactor.

The enzyme catalyses D-mannose 6-phosphate = D-fructose 6-phosphate. It carries out the reaction alpha-D-mannose 1-phosphate + GTP + H(+) = GDP-alpha-D-mannose + diphosphate. The protein operates within nucleotide-sugar biosynthesis; GDP-alpha-D-mannose biosynthesis; GDP-alpha-D-mannose from alpha-D-mannose 1-phosphate (GTP route): step 1/1. Its pathway is nucleotide-sugar biosynthesis; GDP-alpha-D-mannose biosynthesis; alpha-D-mannose 1-phosphate from D-fructose 6-phosphate: step 1/2. In terms of biological role, produces a precursor for alginate polymerization. The alginate layer provides a protective barrier against host immune defenses and antibiotics. This chain is Alginate biosynthesis protein AlgA (algA), found in Pseudomonas syringae pv. tomato (strain ATCC BAA-871 / DC3000).